The primary structure comprises 119 residues: Ribonuclease P protein component (119 aa).

It belongs to the RnpA family. In terms of assembly, consists of a catalytic RNA component (M1 or rnpB) and a protein subunit.

The catalysed reaction is Endonucleolytic cleavage of RNA, removing 5'-extranucleotides from tRNA precursor.. RNaseP catalyzes the removal of the 5'-leader sequence from pre-tRNA to produce the mature 5'-terminus. It can also cleave other RNA substrates such as 4.5S RNA. The protein component plays an auxiliary but essential role in vivo by binding to the 5'-leader sequence and broadening the substrate specificity of the ribozyme. This is Ribonuclease P protein component from Mycolicibacterium paratuberculosis (strain ATCC BAA-968 / K-10) (Mycobacterium paratuberculosis).